The following is a 554-amino-acid chain: ATP-dependent RNA helicase MRH4, mitochondrial (554 aa).

A mitochondrion-targeting transit peptide spans 1-54 (MSSVGIASASLWLRGPVKSALKGRWLSCEQMRRYGTKSAPAVRKGGHSKKARQA). Positions 119–140 (DCGLDDKRVAAFLGQVQPTPIQ) match the Q motif motif. One can recognise a Helicase ATP-binding domain in the interval 150 to 337 (TLMEPQLQVH…NKLFPNLQVV (188 aa)). 163-170 (AETGSGKT) is an ATP binding site. Residues 285-288 (DEAD) carry the DEAD box motif. The region spanning 368–554 (ALAQALYAIM…PVVKKNRPIQ (187 aa)) is the Helicase C-terminal domain. A disordered region spans residues 439 to 474 (RIQDQVRPSELKKPQERRLPNSNIKVADSKDNGQRS). The segment covering 445-457 (RPSELKKPQERRL) has biased composition (basic and acidic residues).

Belongs to the DEAD box helicase family. MRH4 subfamily.

The protein localises to the mitochondrion. The enzyme catalyses ATP + H2O = ADP + phosphate + H(+). ATP-binding RNA helicase involved in mitochondrial RNA metabolism. Required for maintenance of mitochondrial DNA. In Eremothecium gossypii (strain ATCC 10895 / CBS 109.51 / FGSC 9923 / NRRL Y-1056) (Yeast), this protein is ATP-dependent RNA helicase MRH4, mitochondrial (MRH4).